Reading from the N-terminus, the 485-residue chain is Adenosylhomocysteinase (485 aa).

Thr64, Asp139, and Glu205 together coordinate substrate. 206–208 provides a ligand contact to NAD(+); it reads TTT. 2 residues coordinate substrate: Lys235 and Asp239. Residues Asn240, 269–274, Glu292, Asn327, 348–350, and Asn397 contribute to the NAD(+) site; these read GYGDVG and IGH.

This sequence belongs to the adenosylhomocysteinase family. Requires NAD(+) as cofactor.

It catalyses the reaction S-adenosyl-L-homocysteine + H2O = L-homocysteine + adenosine. Its pathway is amino-acid biosynthesis; L-homocysteine biosynthesis; L-homocysteine from S-adenosyl-L-homocysteine: step 1/1. Its function is as follows. Adenosylhomocysteine is a competitive inhibitor of S-adenosyl-L-methionine-dependent methyl transferase reactions; therefore adenosylhomocysteinase may play a key role in the control of methylations via regulation of the intracellular concentration of adenosylhomocysteine. This chain is Adenosylhomocysteinase (SAHH), found in Solanum lycopersicum (Tomato).